The sequence spans 285 residues: Polyamine aminopropyltransferase (285 aa).

The PABS domain occupies 5–238 (EMWYETLHTG…GIMTFAWASD (234 aa)). Residue Gln33 participates in S-methyl-5'-thioadenosine binding. Spermidine contacts are provided by His64 and Asp88. Residues Glu108 and 140-141 (DG) contribute to the S-methyl-5'-thioadenosine site. The Proton acceptor role is filled by Asp158. 158–161 (DCTD) contacts spermidine. Pro165 is a binding site for S-methyl-5'-thioadenosine.

Belongs to the spermidine/spermine synthase family. As to quaternary structure, homodimer or homotetramer.

It localises to the cytoplasm. The catalysed reaction is S-adenosyl 3-(methylsulfanyl)propylamine + putrescine = S-methyl-5'-thioadenosine + spermidine + H(+). It functions in the pathway amine and polyamine biosynthesis; spermidine biosynthesis; spermidine from putrescine: step 1/1. Functionally, catalyzes the irreversible transfer of a propylamine group from the amino donor S-adenosylmethioninamine (decarboxy-AdoMet) to putrescine (1,4-diaminobutane) to yield spermidine. This Erwinia tasmaniensis (strain DSM 17950 / CFBP 7177 / CIP 109463 / NCPPB 4357 / Et1/99) protein is Polyamine aminopropyltransferase.